The chain runs to 301 residues: Recombination-associated protein RdgC (301 aa).

Belongs to the RdgC family.

The protein resides in the cytoplasm. It localises to the nucleoid. Its function is as follows. May be involved in recombination. The protein is Recombination-associated protein RdgC of Stenotrophomonas maltophilia (strain R551-3).